The sequence spans 242 residues: Capsid protein (242 aa).

The Bipartite nuclear localization signal motif lies at 1–42 (MPYKRKLTSYFPQSKRFRGAKSGMAVVKTSASRRLYKKGKRK).

It belongs to the geminiviridae capsid protein family. Homomultimer. Binds to single-stranded and double-stranded viral DNA. Interacts (via nuclear localization signal) with host importin alpha-1a.

It is found in the virion. Its subcellular location is the host nucleus. Its function is as follows. Encapsidates the viral genome into characteristic twinned ('geminate') particles. Binds the genomic viral ssDNA and shuttles it into and out of the cell nucleus. Plays a role in protection of the genome from degradation, virus acquisition and transmission by insect vectors, infectivity, and systemic movement. The CP of monopartite geminiviruses is absolutely essential for virus movement. The sequence is that of Capsid protein from Solanum lycopersicum (Tomato).